The chain runs to 788 residues: Protein translocase subunit SecA 2 (788 aa).

ATP contacts are provided by residues Q77, 95–99, and D491; that span reads GEGKT.

It belongs to the SecA family. In terms of assembly, monomer and homodimer. Part of the essential Sec protein translocation apparatus which comprises SecA, SecYEG and auxiliary proteins SecDF. Other proteins may also be involved.

It is found in the cell membrane. The protein resides in the cytoplasm. The enzyme catalyses ATP + H2O + cellular proteinSide 1 = ADP + phosphate + cellular proteinSide 2.. Functionally, part of the Sec protein translocase complex. Interacts with the SecYEG preprotein conducting channel. Has a central role in coupling the hydrolysis of ATP to the transfer of proteins into and across the cell membrane, serving as an ATP-driven molecular motor driving the stepwise translocation of polypeptide chains across the membrane. This Lactobacillus johnsonii (strain CNCM I-12250 / La1 / NCC 533) protein is Protein translocase subunit SecA 2.